Reading from the N-terminus, the 527-residue chain is EGF domain-specific O-linked N-acetylglucosamine transferase (527 aa).

The signal sequence occupies residues 1-17 (MLMLFVFGVLLHEVSLS). Residues 295–297 (DYD) carry the Required for optimal activity motif. A glycan (N-linked (GlcNAc...) asparagine) is linked at N354. The Prevents secretion from ER motif lies at 524-527 (HDEL).

This sequence belongs to the glycosyltransferase 61 family.

It is found in the endoplasmic reticulum lumen. It catalyses the reaction L-seryl-[protein] + UDP-N-acetyl-alpha-D-glucosamine = 3-O-(N-acetyl-beta-D-glucosaminyl)-L-seryl-[protein] + UDP + H(+). The catalysed reaction is L-threonyl-[protein] + UDP-N-acetyl-alpha-D-glucosamine = 3-O-(N-acetyl-beta-D-glucosaminyl)-L-threonyl-[protein] + UDP + H(+). In terms of biological role, catalyzes the transfer of a single N-acetylglucosamine from UDP-GlcNAc to a serine or threonine residue in extracellular proteins resulting in their modification with a beta-linked N-acetylglucosamine (O-GlcNAc). Specifically glycosylates the Thr residue located between the fifth and sixth conserved cysteines of folded EGF-like domains. The chain is EGF domain-specific O-linked N-acetylglucosamine transferase (EOGT) from Pan troglodytes (Chimpanzee).